A 128-amino-acid polypeptide reads, in one-letter code: Fluoride-specific ion channel FluC (128 aa).

The next 4 helical transmembrane spans lie at 5–25, 35–55, 67–87, and 96–116; these read IVAI…LSIG, LGTL…VVAF, LFVI…SVEV, and FGWA…LTGL. The Na(+) site is built by Gly-75 and Thr-78.

This sequence belongs to the fluoride channel Fluc/FEX (TC 1.A.43) family.

Its subcellular location is the cell inner membrane. The catalysed reaction is fluoride(in) = fluoride(out). Its activity is regulated as follows. Na(+) is not transported, but it plays an essential structural role and its presence is essential for fluoride channel function. Its function is as follows. Fluoride-specific ion channel. Important for reducing fluoride concentration in the cell, thus reducing its toxicity. This chain is Fluoride-specific ion channel FluC, found in Burkholderia mallei (strain NCTC 10247).